The sequence spans 199 residues: Dephospho-CoA kinase (199 aa).

One can recognise a DPCK domain in the interval valine 4 to lysine 199. Alanine 12–threonine 17 contacts ATP.

Belongs to the CoaE family.

It is found in the cytoplasm. The enzyme catalyses 3'-dephospho-CoA + ATP = ADP + CoA + H(+). It participates in cofactor biosynthesis; coenzyme A biosynthesis; CoA from (R)-pantothenate: step 5/5. Its function is as follows. Catalyzes the phosphorylation of the 3'-hydroxyl group of dephosphocoenzyme A to form coenzyme A. The polypeptide is Dephospho-CoA kinase (Enterococcus faecalis (strain ATCC 700802 / V583)).